Here is a 138-residue protein sequence, read N- to C-terminus: Abscisic stress-ripening protein 5 (138 aa).

Basic residues predominate over residues 1-13; sequence MAEEKHHHHLFHH. Disordered stretches follow at residues 1 to 27 and 106 to 138; these read MAEE…DSYG and GAGG…HLFG.

This sequence belongs to the abscisic acid and water stress-induced protein family.

The protein resides in the nucleus. Its subcellular location is the cytoplasm. Its function is as follows. Involved in tolerance to aluminum. Regulates the expression of different genes that collectively contribute to the protection of the cell in response to aluminum stress. The sequence is that of Abscisic stress-ripening protein 5 from Oryza sativa subsp. indica (Rice).